The chain runs to 247 residues: O-methyltransferase imqG (247 aa).

S-adenosyl-L-methionine is bound by residues Glu-84, 86–87 (GT), and Ala-138. Positions 163, 189, and 190 each coordinate a divalent metal cation. Substrate is bound at residue Asp-163.

The protein belongs to the class I-like SAM-binding methyltransferase superfamily. Cation-dependent O-methyltransferase family. CCoAMT subfamily. In terms of assembly, homodimer. It depends on a divalent metal cation as a cofactor.

It participates in secondary metabolite biosynthesis. O-methyltransferase; part of the gene cluster that mediates the biosynthesis of imizoquins A to D, tripeptide-derived alkaloids that serve a protective role against oxidative stress that are essential for normal germination. ImqB is a canonical three-module NRPS that assembles the tripeptide backbone of the imizoquins via condensation of Trp, Tyr, and Leu-derived precursors. N-methylation by imqF and phenol oxidation by imqC, followed by cyclization via the FAD-dependent oxidase imqH carry out the three-step transformation of L-tyrosine into tetrahydroisoquinoline. Importantly, this sequence requires the presence of a free amine in the tyrosine moiety, indicating that isoquinoline formation occurs prior to peptide bond formation. The imidazolidin-4-one ring of imizoquins could form following additional oxidation of the methyl-derived bridgehead carbon by imqH. Lastly, O-methylation by imqG and leucine hydroxylation by imqE complete biosynthesis of the imizoquins. In Aspergillus flavus (strain ATCC 200026 / FGSC A1120 / IAM 13836 / NRRL 3357 / JCM 12722 / SRRC 167), this protein is O-methyltransferase imqG.